The chain runs to 299 residues: N-acetylmuramic acid 6-phosphate etherase (299 aa).

Positions 54–217 (TIAQYKKGGR…STITMVGVGK (164 aa)) constitute an SIS domain. Glu82 acts as the Proton donor in catalysis. Glu113 is a catalytic residue.

This sequence belongs to the GCKR-like family. MurNAc-6-P etherase subfamily. As to quaternary structure, homodimer.

The enzyme catalyses N-acetyl-D-muramate 6-phosphate + H2O = N-acetyl-D-glucosamine 6-phosphate + (R)-lactate. It functions in the pathway amino-sugar metabolism; N-acetylmuramate degradation. In terms of biological role, specifically catalyzes the cleavage of the D-lactyl ether substituent of MurNAc 6-phosphate, producing GlcNAc 6-phosphate and D-lactate. This Staphylococcus aureus (strain bovine RF122 / ET3-1) protein is N-acetylmuramic acid 6-phosphate etherase.